Reading from the N-terminus, the 109-residue chain is Tetracenomycin F2 cyclase (109 aa).

As to quaternary structure, homodimer.

The enzyme catalyses tetracenomycin F2 + H(+) = tetracenomycin F1 + H2O. Its pathway is antibiotic biosynthesis; tetracenomycin C biosynthesis. In terms of biological role, catalyzing the conversion of tetracenomycin F2 to tetracenomycin F1. In Streptomyces glaucescens, this protein is Tetracenomycin F2 cyclase (tcmI).